The sequence spans 1620 residues: DNA (cytosine-5)-methyltransferase 1 (1620 aa).

The interval 1 to 21 is disordered; sequence MPARTAPARVPALASPAGSLP. The tract at residues 1–120 is interaction with DMAP1; that stretch reads MPARTAPARV…SRPTWRAEMA (120 aa). Positions 1-145 are interaction with DNMT3A; sequence MPARTAPARV…RRSKSDSDTL (145 aa). Interaction with the PRC2/EED-EZH2 complex stretches follow at residues 1–343 and 305–609; these read MPAR…SERK and APET…RVMG. The residue at position 15 (serine 15) is a Phosphoserine. Residues 16 to 109 enclose the DMAP1-binding domain; that stretch reads PAGSLPDHVR…TQKANGCPAN (94 aa). Lysine 70 carries the post-translational modification N6,N6-dimethyllysine; by EHMT2. The interval 96–369 is disordered; it reads THTLTQKANG…PECGQHLDDP (274 aa). Residues 126-137 are compositionally biased toward basic residues; that stretch reads PRSRPKPRGPRR. Serine 138 carries the phosphoserine modification. Lysine 139 carries the post-translational modification N6-methyllysine; by SETD7. At serine 140 the chain carries Phosphoserine. Over residues 144-155 the composition is skewed to polar residues; the sequence is TLSVETSPSSVA. Position 146 is a phosphoserine; by CK1 (serine 146). The interaction with DNMT3B stretch occupies residues 147 to 217; that stretch reads VETSPSSVAT…SGAAAAVEKL (71 aa). Residues serine 150 and serine 152 each carry the phosphoserine modification. Residues 161 to 172 form an interaction with PCNA region; sequence RQTTITAHFTKG. Residue threonine 164 is modified to Phosphothreonine. Lysine 171 carries the post-translational modification N6-acetyllysine. Positions 175–202 match the Nuclear localization signal motif; the sequence is KRKPKEESEEGNSAESAAEERDQDKKRR. A compositionally biased stretch (basic and acidic residues) spans 192-205; that stretch reads AEERDQDKKRRVVD. Serine 240 is modified (phosphoserine). 2 stretches are compositionally biased toward basic and acidic residues: residues 246-267 and 286-300; these read RELSLRRKSKEDPDREARPETH and QPRDPAAKRRPKEAE. Residue lysine 255 is modified to N6-acetyllysine; alternate. A Glycyl lysine isopeptide (Lys-Gly) (interchain with G-Cter in SUMO2); alternate cross-link involves residue lysine 255. Positions 308–317 are enriched in acidic residues; the sequence is TPEDRDEDER. A DNA replication foci-targeting sequence region spans residues 328–556; that stretch reads KLESHTVPVQ…NVNRFTEDSL (229 aa). Zn(2+) is bound by residues cysteine 359 and cysteine 362. Lysine 372 carries the N6-acetyllysine modification. Positions 420 and 424 each coordinate Zn(2+). Residues serine 515 and serine 555 each carry the phosphoserine modification. Residues 649–695 form a CXXC-type zinc finger; that stretch reads NAMKRRRCGVCEVCQQPECGKCKACKDMVKFGGTGRSKQACLKRRCP. Positions 656, 659, 662, 667, 670, 673, 689, and 694 each coordinate Zn(2+). Residues 696–757 form an autoinhibitory linker region; it reads NLAVKEADDD…TYYQKVSIDE (62 aa). The tract at residues 696 to 813 is interaction with HDAC1; sequence NLAVKEADDD…TDTVLGATSD (118 aa). Residues 702–713 are compositionally biased toward acidic residues; sequence ADDDEEADDDVS. The disordered stretch occupies residues 702–732; the sequence is ADDDEEADDDVSEMPSPKKLHQGKKKKQNKD. A phosphoserine mark is found at serine 713 and serine 717. Basic residues predominate over residues 719 to 730; that stretch reads KKLHQGKKKKQN. Phosphoserine is present on serine 735. Lysine 752 bears the N6-acetyllysine mark. Positions 758–884 constitute a BAH 1 domain; sequence EMLEVGDCVS…QEYARFESPP (127 aa). Phosphoserine is present on serine 882. N6-acetyllysine is present on residues lysine 895, lysine 961, lysine 965, and lysine 979. In terms of domain architecture, BAH 2 spans 976-1103; the sequence is HYRKYSDYIK…SKTKNFEDPP (128 aa). The interval 1097–1136 is disordered; the sequence is KNFEDPPNHARSPGNKGKGKGKGKGKGKHQVSEPKEPEAA. 6 tandem repeats follow at residues 1112–1113, 1114–1115, 1116–1117, 1118–1119, 1120–1121, and 1122–1123. The segment at 1112 to 1125 is 7 X 2 AA tandem repeats of K-G; that stretch reads KGKGKGKGKGKGKH. Positions 1113 to 1125 are enriched in basic residues; sequence GKGKGKGKGKGKH. Lysine 1114, lysine 1116, lysine 1118, lysine 1120, lysine 1122, and lysine 1124 each carry N6-acetyllysine. Residues 1124 to 1125 form a 7; approximate repeat; the sequence is KH. Residues 1124–1620 are interaction with the PRC2/EED-EZH2 complex; sequence KHQVSEPKEP…KAKEEAATKD (497 aa). The span at 1126–1135 shows a compositional bias: basic and acidic residues; that stretch reads QVSEPKEPEA. In terms of domain architecture, SAM-dependent MTase C5-type spans 1142-1601; that stretch reads LRTLDVFSGC…LEIKLCLLSS (460 aa). Positions 1142 to 1620 are catalytic; sequence LRTLDVFSGC…KAKEEAATKD (479 aa). Residues serine 1149, 1153-1154, 1171-1172, and 1193-1194 contribute to the S-adenosyl-L-methionine site; these read GL, EM, and DC. Residue cysteine 1229 is part of the active site. Lysine 1352 and lysine 1418 each carry N6-acetyllysine. Position 1582 (valine 1582) interacts with S-adenosyl-L-methionine. A Glycyl lysine isopeptide (Lys-Gly) (interchain with G-Cter in SUMO2) cross-link involves residue lysine 1611.

Belongs to the class I-like SAM-binding methyltransferase superfamily. C5-methyltransferase family. Homodimer. Forms a stable complex with E2F1, BB1 and HDAC1. Forms a complex with DMAP1 and HDAC2, with direct interaction. Interacts with the PRC2/EED-EZH2 complex. Probably part of a corepressor complex containing ZNF304, TRIM28, SETDB1 and DNMT1. Interacts with UHRF1; promoting its recruitment to hemimethylated DNA. Interacts with USP7, promoting its deubiquitination. Interacts with BAZ2A/TIP5. Interacts with PCNA. Interacts with MBD2 and MBD3. Interacts with DNMT3A and DNMT3B. Interacts with UBC9. Interacts with HDAC1. Interacts with CSNK1D. Interacts with SIRT7. Interacts with ZNF263; recruited to the SIX3 promoter along with other proteins involved in chromatin modification and transcriptional corepression where it contributes to transcriptional repression. Interacts with L3MBTL3 and DCAF5; the interaction requires DNMT1 methylation at Lys-139 and is necessary to target DNMT1 for ubiquitination by the CRL4-DCAF5 E3 ubiquitin ligase complex and proteasomal degradation. Interacts with PHF20L1; the interaction requires DNMT1 methylation at Lys-139 and protects DNMT1 from ubiquitination and proteasomal degradation. Post-translationally, sumoylated; sumoylation increases activity. In terms of processing, phosphorylation at Ser-146 by CK1 reduces DNA-binding activity. Acetylation on multiple lysines, mainly by KAT2B/PCAF, regulates cell cycle G(2)/M transition. Deacetylation of Lys-1352 and Lys-1418 by SIRT1 increases methyltransferase activity. Post-translationally, phosphorylation of Ser-152 by CDKs is important for enzymatic activity and protein stability. Phosphorylation of Ser-140 by AKT1 prevents methylation by SETD7 thereby increasing DNMT1 stability. In terms of processing, methylation at Lys-139 by SETD7 is necessary for the regulation of DNMT1 proteasomal degradation. Ubiquitinated by UHRF1; interaction with USP7 counteracts ubiquitination by UHRF1 by promoting deubiquitination and preventing degradation by the proteasome. In terms of tissue distribution, isoform 1 is expressed in embryonic stem cells and in somatic tissues. Isoform 2 is expressed in oocytes, preimplantation embryos, testis and in skeletal muscle during myogenesis.

It localises to the nucleus. The protein localises to the cytoplasm. The enzyme catalyses a 2'-deoxycytidine in DNA + S-adenosyl-L-methionine = a 5-methyl-2'-deoxycytidine in DNA + S-adenosyl-L-homocysteine + H(+). Allosterically regulated. The binding of 5-methylcytosine-containing DNA to the N-terminal parts of DNMT1 causes an allosteric activation of the catalytic domain by a direct interaction of its Zn-binding domain with the catalytic domain. Its function is as follows. Methylates CpG residues. Preferentially methylates hemimethylated DNA. Associates with DNA replication sites in S phase maintaining the methylation pattern in the newly synthesized strand, that is essential for epigenetic inheritance. Associates with chromatin during G2 and M phases to maintain DNA methylation independently of replication. It is responsible for maintaining methylation patterns established in development. DNA methylation is coordinated with methylation of histones. Mediates transcriptional repression by direct binding to HDAC2. In association with DNMT3B and via the recruitment of CTCFL/BORIS, involved in activation of BAG1 gene expression by modulating dimethylation of promoter histone H3 at H3K4 and H3K9. Probably forms a corepressor complex required for activated KRAS-mediated promoter hypermethylation and transcriptional silencing of tumor suppressor genes (TSGs) or other tumor-related genes in colorectal cancer (CRC) cells. Also required to maintain a transcriptionally repressive state of genes in undifferentiated embryonic stem cells (ESCs). Associates at promoter regions of tumor suppressor genes (TSGs) leading to their gene silencing. Promotes tumor growth. The chain is DNA (cytosine-5)-methyltransferase 1 (Dnmt1) from Mus musculus (Mouse).